The following is a 353-amino-acid chain: 3'(2'),5'-bisphosphate nucleotidase 1 (353 aa).

The active-site Proton acceptor is the Asp46. The Mg(2+) site is built by Glu71, Asp134, Ile136, and Asp137. Catalysis depends on Thr139, which acts as the Proton acceptor. Adenosine 3',5'-bisphosphate-binding residues include Thr139, His235, Ser259, Lys262, Arg276, and Asp288. AMP is bound by residues His235, Ser259, Lys262, Arg276, and Asp288. Asp288 contacts Mg(2+).

Belongs to the inositol monophosphatase superfamily. Mg(2+) is required as a cofactor. In terms of tissue distribution, expressed in roots, leaves, stems, flowers and siliques.

The enzyme catalyses 3'-phosphoadenylyl sulfate + H2O = adenosine 5'-phosphosulfate + phosphate. It carries out the reaction adenosine 3',5'-bisphosphate + H2O = AMP + phosphate. It catalyses the reaction adenosine 2',5'-bisphosphate + H2O = AMP + phosphate. The catalysed reaction is 1D-myo-inositol 1,4-bisphosphate + H2O = 1D-myo-inositol 4-phosphate + phosphate. The enzyme catalyses 1D-myo-inositol 1,3,4-trisphosphate + H2O = 1D-myo-inositol 3,4-bisphosphate + phosphate. It participates in signal transduction; phosphatidylinositol signaling pathway. With respect to regulation, inhibited non-competitively by Li(+) (IC(50)=0.20 mM) and Na(+) (IC(50)=200 mM). Phosphatase that converts adenosine 3'-phosphate 5'-phosphosulfate (PAPS) to adenosine 5'-phosphosulfate (APS) and 3'(2')-phosphoadenosine 5'-phosphate (PAP) to AMP. May regulate the flux of sulfur in the sulfur-activation pathway by converting PAPS to APS. May play a role in the biosynthesis of sulfate conjugates and RNA processing. Is also able to hydrolyze inositol 1,4-bisphosphate and inositol 1,3,4-trisphosphate. Could be considered as a negative regulator of abscisic acid (ABA)- and stress-responsive genes, through modulating the inositol 1,4,5-trisphosphate (IP3) turnover. Is also involved in salt tolerance. Acts as a suppressor of virus- and transgene-induced silencing. The protein is 3'(2'),5'-bisphosphate nucleotidase 1 of Arabidopsis thaliana (Mouse-ear cress).